The following is a 1320-amino-acid chain: Mediator of RNA polymerase II transcription subunit 15 (1320 aa).

Over residues 235-244 (QQASLNQLTP) the composition is skewed to polar residues. Disordered stretches follow at residues 235 to 283 (QQAS…KPQQ), 372 to 398 (KNMM…PQQA), 540 to 688 (QLQQ…QQQT), 702 to 791 (QTQQ…PTEQ), and 1233 to 1270 (DSSS…DSKK). Low complexity-rich tracts occupy residues 245–283 (QQRA…KPQQ), 375–398 (MAQQ…PQQA), and 540–554 (QLQQ…HTQL). Polar residues predominate over residues 555-587 (ADSFSQRQFTSPTLAKPSANVSTIAQQQTQPTA). Composition is skewed to low complexity over residues 588 to 624 (LSQS…QQQQ), 634 to 688 (QQQT…QQQT), and 702 to 780 (QTQQ…PQQT).

It belongs to the Mediator complex subunit 15 family. Component of the Mediator complex.

It is found in the nucleus. Component of the Mediator complex, a coactivator involved in regulated gene transcription of nearly all RNA polymerase II-dependent genes. Mediator functions as a bridge to convey information from gene-specific regulatory proteins to the basal RNA polymerase II transcription machinery. Mediator is recruited to promoters by direct interactions with regulatory proteins and serves as a scaffold for the assembly of a functional preinitiation complex with RNA polymerase II and the general transcription factors. The chain is Mediator of RNA polymerase II transcription subunit 15 (GAL11) from Eremothecium gossypii (strain ATCC 10895 / CBS 109.51 / FGSC 9923 / NRRL Y-1056) (Yeast).